The chain runs to 140 residues: MLLHIVARGRIGRGPEADLVDRYIKRIGWPTRITELPDSGGRLPPRDPGTVLVMLDEKGEQLGSMAFAEKLGRWRDDGRREVRFLIGAADGFDEAQRREADLLFAFGKATWPHLLARAMLAEQLWRATSILAGHPYHREG.

The S-adenosyl-L-methionine site is built by Leu55 and Gly87.

This sequence belongs to the RNA methyltransferase RlmH family. Homodimer.

It is found in the cytoplasm. It carries out the reaction pseudouridine(1915) in 23S rRNA + S-adenosyl-L-methionine = N(3)-methylpseudouridine(1915) in 23S rRNA + S-adenosyl-L-homocysteine + H(+). In terms of biological role, specifically methylates the pseudouridine at position 1915 (m3Psi1915) in 23S rRNA. This Rhizorhabdus wittichii (strain DSM 6014 / CCUG 31198 / JCM 15750 / NBRC 105917 / EY 4224 / RW1) (Sphingomonas wittichii) protein is Ribosomal RNA large subunit methyltransferase H.